A 203-amino-acid polypeptide reads, in one-letter code: Small ribosomal subunit protein eS1 (203 aa).

Belongs to the eukaryotic ribosomal protein eS1 family.

This chain is Small ribosomal subunit protein eS1, found in Methanosarcina acetivorans (strain ATCC 35395 / DSM 2834 / JCM 12185 / C2A).